Consider the following 168-residue polypeptide: Lipoprotein signal peptidase (168 aa).

Transmembrane regions (helical) follow at residues 6–26, 70–90, and 98–118; these read VLAALKWYGVALLVILLDQIT, WFLALLAAGVSVLLIFWIAKL, and ALALALVLGGALGNLYDRMLL. Residues D123 and D141 contribute to the active site. A helical membrane pass occupies residues 139 to 159; the sequence is IADSAICIGAALLVWDSLFGT.

This sequence belongs to the peptidase A8 family.

It is found in the cell inner membrane. It carries out the reaction Release of signal peptides from bacterial membrane prolipoproteins. Hydrolyzes -Xaa-Yaa-Zaa-|-(S,diacylglyceryl)Cys-, in which Xaa is hydrophobic (preferably Leu), and Yaa (Ala or Ser) and Zaa (Gly or Ala) have small, neutral side chains.. Its pathway is protein modification; lipoprotein biosynthesis (signal peptide cleavage). In terms of biological role, this protein specifically catalyzes the removal of signal peptides from prolipoproteins. The protein is Lipoprotein signal peptidase of Teredinibacter turnerae (strain ATCC 39867 / T7901).